Reading from the N-terminus, the 302-residue chain is TATA-box-binding protein (302 aa).

Disordered stretches follow at residues Met-1–Thr-22 and Ser-50–Gln-81. The span at Ser-50–Gly-70 shows a compositional bias: low complexity. Repeat copies occupy residues Leu-128–Val-204 and Ile-218–Leu-295.

It belongs to the TBP family. Enriched in testis but hardly detectable in the ovary (at protein level).

Its subcellular location is the nucleus. General transcription factor that functions at the core of the DNA-binding multiprotein factor TFIID. Binding of TFIID to the TATA box is the initial transcriptional step of the pre-initiation complex (PIC), playing a role in the activation of eukaryotic genes transcribed by RNA polymerase II. Members of the TBP family are differentially required for transcription and development during early embryogenesis. Regulates mRNA levels in the early embryo by both transcriptional and post-transcriptional mechanisms. Required for transcription of a subset of genes at the mid-blastula transition (MBT). Negatively regulates the expression of other embryonic genes, including autoregulation of the tbp promoter itself. Also functions within a transcription-dependent mechanism to direct the temporally-regulated degradation of a subset of maternal mRNAs after the MBT. This is part of a general mechanism to regulate the maternal to zygotic transition and is required for normal embryonic development. Binds to promoters of a subset of genes. Required for gastrulation. The polypeptide is TATA-box-binding protein (Danio rerio (Zebrafish)).